The sequence spans 621 residues: Chaperone protein HtpG (621 aa).

Residues 1 to 341 form an a; substrate-binding region; sequence MSNQEYTFQT…SEDLPLNVSR (341 aa). Residues 342–547 form a b region; it reads EILQQNKILA…GDEPNAMMAN (206 aa). The segment at 548-621 is c; the sequence is WMRQMGQSVP…RLNSVLLKAL (74 aa).

It belongs to the heat shock protein 90 family. Homodimer.

It is found in the cytoplasm. Functionally, molecular chaperone. Has ATPase activity. The polypeptide is Chaperone protein HtpG (Helicobacter pylori (strain J99 / ATCC 700824) (Campylobacter pylori J99)).